Here is a 295-residue protein sequence, read N- to C-terminus: Light-independent protochlorophyllide reductase iron-sulfur ATP-binding protein (295 aa).

Residues 10-15 and Lys39 contribute to the ATP site; that span reads GIGKST. A Mg(2+)-binding site is contributed by Ser14. Residues Cys95 and Cys129 each contribute to the [4Fe-4S] cluster site. 180-181 contributes to the ATP binding site; sequence NR. Positions 275–289 are enriched in basic and acidic residues; the sequence is TKDKKENKKEDKENS. Residues 275–295 form a disordered region; that stretch reads TKDKKENKKEDKENSADFTWL.

It belongs to the NifH/BchL/ChlL family. Homodimer. Protochlorophyllide reductase is composed of three subunits; ChlL, ChlN and ChlB. [4Fe-4S] cluster is required as a cofactor.

The protein resides in the plastid. The protein localises to the chloroplast. It catalyses the reaction chlorophyllide a + oxidized 2[4Fe-4S]-[ferredoxin] + 2 ADP + 2 phosphate = protochlorophyllide a + reduced 2[4Fe-4S]-[ferredoxin] + 2 ATP + 2 H2O. It functions in the pathway porphyrin-containing compound metabolism; chlorophyll biosynthesis (light-independent). Functionally, component of the dark-operative protochlorophyllide reductase (DPOR) that uses Mg-ATP and reduced ferredoxin to reduce ring D of protochlorophyllide (Pchlide) to form chlorophyllide a (Chlide). This reaction is light-independent. The L component serves as a unique electron donor to the NB-component of the complex, and binds Mg-ATP. This chain is Light-independent protochlorophyllide reductase iron-sulfur ATP-binding protein, found in Physcomitrium patens (Spreading-leaved earth moss).